Reading from the N-terminus, the 242-residue chain is UPF0309 protein BAbS19_II03080 (242 aa).

In terms of domain architecture, SIS spans 30 to 214; sequence AADLIAAAAR…ARLVGEGDAP (185 aa).

This sequence belongs to the UPF0309 family.

In Brucella abortus (strain S19), this protein is UPF0309 protein BAbS19_II03080.